We begin with the raw amino-acid sequence, 355 residues long: Cobalt-precorrin-5B C(1)-methyltransferase (355 aa).

Belongs to the CbiD family.

The catalysed reaction is Co-precorrin-5B + S-adenosyl-L-methionine = Co-precorrin-6A + S-adenosyl-L-homocysteine. It participates in cofactor biosynthesis; adenosylcobalamin biosynthesis; cob(II)yrinate a,c-diamide from sirohydrochlorin (anaerobic route): step 6/10. In terms of biological role, catalyzes the methylation of C-1 in cobalt-precorrin-5B to form cobalt-precorrin-6A. This chain is Cobalt-precorrin-5B C(1)-methyltransferase, found in Parasynechococcus marenigrum (strain WH8102).